We begin with the raw amino-acid sequence, 121 residues long: Small ribosomal subunit protein uS13 (121 aa).

The segment at histidine 91 to lysine 121 is disordered.

The protein belongs to the universal ribosomal protein uS13 family. In terms of assembly, part of the 30S ribosomal subunit. Forms a loose heterodimer with protein S19. Forms two bridges to the 50S subunit in the 70S ribosome.

In terms of biological role, located at the top of the head of the 30S subunit, it contacts several helices of the 16S rRNA. In the 70S ribosome it contacts the 23S rRNA (bridge B1a) and protein L5 of the 50S subunit (bridge B1b), connecting the 2 subunits; these bridges are implicated in subunit movement. Contacts the tRNAs in the A and P-sites. The sequence is that of Small ribosomal subunit protein uS13 from Cupriavidus taiwanensis (strain DSM 17343 / BCRC 17206 / CCUG 44338 / CIP 107171 / LMG 19424 / R1) (Ralstonia taiwanensis (strain LMG 19424)).